A 147-amino-acid chain; its full sequence is Protein BUD31 homolog (147 aa).

Positions 8-12 (RRVRK) match the Nuclear localization signal motif.

This sequence belongs to the BUD31 (G10) family. In terms of assembly, identified in the spliceosome C complex.

It localises to the nucleus. Its function is as follows. Involved in pre-mRNA splicing process. The protein is Protein BUD31 homolog of Caenorhabditis elegans.